The chain runs to 173 residues: Superoxide dismutase [Cu-Zn] 2 (173 aa).

The first 19 residues, 1–19 (MKRLSLAMVTLLACAGAQA), serve as a signal peptide directing secretion. Residues H67, H69, and H92 each contribute to the Cu cation site. A disulfide bridge links C74 with C169. Zn(2+) contacts are provided by H92, H101, H109, and D112. Residue H147 coordinates Cu cation.

This sequence belongs to the Cu-Zn superoxide dismutase family. As to quaternary structure, monomer. It depends on Cu cation as a cofactor. The cofactor is Zn(2+).

The protein resides in the periplasm. It catalyses the reaction 2 superoxide + 2 H(+) = H2O2 + O2. In terms of biological role, destroys radicals which are normally produced within the cells and which are toxic to biological systems. This Salmonella typhimurium (strain LT2 / SGSC1412 / ATCC 700720) protein is Superoxide dismutase [Cu-Zn] 2 (sodC).